The primary structure comprises 350 residues: Holliday junction branch migration complex subunit RuvB (350 aa).

Residues 1–22 form a disordered region; sequence MDHTASLSPVRPEAQPTDDRER. The large ATPase domain (RuvB-L) stretch occupies residues 1–185; the sequence is MDHTASLSPV…FGIVERFEFY (185 aa). Residues Leu-24, Arg-25, Gly-66, Lys-69, Thr-70, Thr-71, 132 to 134, Arg-175, Tyr-185, and Arg-222 each bind ATP; that span reads EDY. Position 70 (Thr-70) interacts with Mg(2+). The segment at 186 to 256 is small ATPAse domain (RuvB-S); that stretch reads TPEELAAIVQ…IVRAGLAHLK (71 aa). A head domain (RuvB-H) region spans residues 259-350; that stretch reads ELGLELHDIQ…PHSPEQGTLL (92 aa). Arg-314 and Arg-319 together coordinate DNA.

Belongs to the RuvB family. Homohexamer. Forms an RuvA(8)-RuvB(12)-Holliday junction (HJ) complex. HJ DNA is sandwiched between 2 RuvA tetramers; dsDNA enters through RuvA and exits via RuvB. An RuvB hexamer assembles on each DNA strand where it exits the tetramer. Each RuvB hexamer is contacted by two RuvA subunits (via domain III) on 2 adjacent RuvB subunits; this complex drives branch migration. In the full resolvosome a probable DNA-RuvA(4)-RuvB(12)-RuvC(2) complex forms which resolves the HJ.

The protein localises to the cytoplasm. The catalysed reaction is ATP + H2O = ADP + phosphate + H(+). Functionally, the RuvA-RuvB-RuvC complex processes Holliday junction (HJ) DNA during genetic recombination and DNA repair, while the RuvA-RuvB complex plays an important role in the rescue of blocked DNA replication forks via replication fork reversal (RFR). RuvA specifically binds to HJ cruciform DNA, conferring on it an open structure. The RuvB hexamer acts as an ATP-dependent pump, pulling dsDNA into and through the RuvAB complex. RuvB forms 2 homohexamers on either side of HJ DNA bound by 1 or 2 RuvA tetramers; 4 subunits per hexamer contact DNA at a time. Coordinated motions by a converter formed by DNA-disengaged RuvB subunits stimulates ATP hydrolysis and nucleotide exchange. Immobilization of the converter enables RuvB to convert the ATP-contained energy into a lever motion, pulling 2 nucleotides of DNA out of the RuvA tetramer per ATP hydrolyzed, thus driving DNA branch migration. The RuvB motors rotate together with the DNA substrate, which together with the progressing nucleotide cycle form the mechanistic basis for DNA recombination by continuous HJ branch migration. Branch migration allows RuvC to scan DNA until it finds its consensus sequence, where it cleaves and resolves cruciform DNA. This is Holliday junction branch migration complex subunit RuvB from Treponema pallidum (strain Nichols).